The primary structure comprises 518 residues: uncharacterized protein (518 aa).

The signal sequence occupies residues 1–21 (MWKWKVILLFLAEMFVSGVNG). N30, N142, N295, N342, N362, N410, and N503 each carry an N-linked (GlcNAc...) asparagine glycan. The CUB domain maps to 389 to 517 (CPPFGITNSV…RGFWVSITPQ (129 aa)).

It is found in the secreted. This is an uncharacterized protein from Caenorhabditis elegans.